Consider the following 610-residue polypeptide: Elongation factor 4 (610 aa).

The 183-residue stretch at 14–196 folds into the tr-type G domain; the sequence is NRIRNFSIIA…ALVANIPPPK (183 aa). GTP is bound by residues 26–31 and 143–146; these read DHGKST and NKID.

The protein belongs to the TRAFAC class translation factor GTPase superfamily. Classic translation factor GTPase family. LepA subfamily.

Its subcellular location is the cell inner membrane. It carries out the reaction GTP + H2O = GDP + phosphate + H(+). Its function is as follows. Required for accurate and efficient protein synthesis under certain stress conditions. May act as a fidelity factor of the translation reaction, by catalyzing a one-codon backward translocation of tRNAs on improperly translocated ribosomes. Back-translocation proceeds from a post-translocation (POST) complex to a pre-translocation (PRE) complex, thus giving elongation factor G a second chance to translocate the tRNAs correctly. Binds to ribosomes in a GTP-dependent manner. This is Elongation factor 4 from Legionella pneumophila (strain Paris).